The following is a 610-amino-acid chain: ESX-5 secretion system protein EccA5 (610 aa).

An ATP-binding site is contributed by 357–364 (GPPGTGKT).

This sequence belongs to the CbxX/CfxQ family. As to quaternary structure, part of the ESX-5 / type VII secretion system (T7SS), which is composed of cytosolic and membrane components.

The protein resides in the cytoplasm. Part of an ESX-5 / type VII specialized secretion system (T7SS), which exports several proteins. EccA5 exhibits ATPase activity and may provide energy for the export of ESX-5 substrates. This Mycobacterium bovis (strain ATCC BAA-935 / AF2122/97) protein is ESX-5 secretion system protein EccA5.